The sequence spans 238 residues: CBS domain-containing protein CBSX2, chloroplastic (238 aa).

The N-terminal 71 residues, 1-71 (MGSISLSNSM…ASVNNNNSVP (71 aa)), are a transit peptide targeting the chloroplast. 2 consecutive CBS domains span residues 83–145 (MTPR…QNDT) and 177–234 (MTPS…KRET).

Its subcellular location is the plastid. It localises to the chloroplast stroma. The protein is CBS domain-containing protein CBSX2, chloroplastic (CBSX2) of Arabidopsis thaliana (Mouse-ear cress).